The sequence spans 734 residues: Photosystem I P700 chlorophyll a apoprotein A2 (734 aa).

A run of 8 helical transmembrane segments spans residues 46-69, 135-158, 175-199, 273-291, 330-353, 369-395, 417-439, and 517-535; these read IFASHFGHLAVIFLWTSGNLFHVA, LYAGSLFLLFLAGVFLFAGWLHLQ, LNHHLSGLFGFSSLAWSAHLIHVAI, IAHHHLAIGVVFIFAGHMY, LHFQLGLALASLGVITSLVAQHMY, SALYTHHQYIAGFLMVGAFAHGAIFFV, AIISHLSWVSLFLGFHTLGIYVH, and FLIHHAIALALHTTTLILV. Positions 559 and 568 each coordinate [4Fe-4S] cluster. The next 2 membrane-spanning stretches (helical) occupy residues 575-596 and 643-665; these read AFYLSMFWMLNTIGWVTFYWHW and LSVWSWMFLFGHLIWATGFMFLI. His-654, Met-662, and Tyr-670 together coordinate chlorophyll a. Trp-671 lines the phylloquinone pocket. A helical transmembrane segment spans residues 707-727; that stretch reads LVGLIHFTAGYIFTYAAFVIA.

Belongs to the PsaA/PsaB family. In terms of assembly, the PsaA/B heterodimer binds the P700 chlorophyll special pair and subsequent electron acceptors. PSI consists of a core antenna complex that captures photons, and an electron transfer chain that converts photonic excitation into a charge separation. The eukaryotic PSI reaction center is composed of at least 11 subunits. P700 is a chlorophyll a/chlorophyll a' dimer, A0 is one or more chlorophyll a, A1 is one or both phylloquinones and FX is a shared 4Fe-4S iron-sulfur center. serves as cofactor.

The protein localises to the plastid. The protein resides in the chloroplast thylakoid membrane. The enzyme catalyses reduced [plastocyanin] + hnu + oxidized [2Fe-2S]-[ferredoxin] = oxidized [plastocyanin] + reduced [2Fe-2S]-[ferredoxin]. In terms of biological role, psaA and PsaB bind P700, the primary electron donor of photosystem I (PSI), as well as the electron acceptors A0, A1 and FX. PSI is a plastocyanin/cytochrome c6-ferredoxin oxidoreductase, converting photonic excitation into a charge separation, which transfers an electron from the donor P700 chlorophyll pair to the spectroscopically characterized acceptors A0, A1, FX, FA and FB in turn. Oxidized P700 is reduced on the lumenal side of the thylakoid membrane by plastocyanin or cytochrome c6. The chain is Photosystem I P700 chlorophyll a apoprotein A2 from Rhodomonas salina (Cryptomonas salina).